The primary structure comprises 278 residues: Large ribosomal subunit protein uL2 (278 aa).

3 disordered regions span residues 1 to 20, 25 to 58, and 223 to 278; these read MGIR…SVSD, TRST…GGGH, and GVVM…GKKR. Basic residues predominate over residues 37 to 58; sequence LHGKGGRNAHGRITTRHKGGGH. A compositionally biased stretch (basic and acidic residues) spans 253–268; it reads PEGRTRKPNKPSDKLI. Residues 269–278 show a composition bias toward basic residues; it reads VRRRRTGKKR.

The protein belongs to the universal ribosomal protein uL2 family. As to quaternary structure, part of the 50S ribosomal subunit. Forms a bridge to the 30S subunit in the 70S ribosome.

In terms of biological role, one of the primary rRNA binding proteins. Required for association of the 30S and 50S subunits to form the 70S ribosome, for tRNA binding and peptide bond formation. It has been suggested to have peptidyltransferase activity; this is somewhat controversial. Makes several contacts with the 16S rRNA in the 70S ribosome. This chain is Large ribosomal subunit protein uL2, found in Mycolicibacterium smegmatis (strain ATCC 700084 / mc(2)155) (Mycobacterium smegmatis).